The primary structure comprises 287 residues: Lipoyl synthase (287 aa).

The [4Fe-4S] cluster site is built by C38, C43, C49, C64, C68, C71, and S277. Residues 50-266 (WSRGTATFLL…KTVAESLGLR (217 aa)) enclose the Radical SAM core domain.

Belongs to the radical SAM superfamily. Lipoyl synthase family. [4Fe-4S] cluster serves as cofactor.

It localises to the cytoplasm. The enzyme catalyses [[Fe-S] cluster scaffold protein carrying a second [4Fe-4S](2+) cluster] + N(6)-octanoyl-L-lysyl-[protein] + 2 oxidized [2Fe-2S]-[ferredoxin] + 2 S-adenosyl-L-methionine + 4 H(+) = [[Fe-S] cluster scaffold protein] + N(6)-[(R)-dihydrolipoyl]-L-lysyl-[protein] + 4 Fe(3+) + 2 hydrogen sulfide + 2 5'-deoxyadenosine + 2 L-methionine + 2 reduced [2Fe-2S]-[ferredoxin]. Its pathway is protein modification; protein lipoylation via endogenous pathway; protein N(6)-(lipoyl)lysine from octanoyl-[acyl-carrier-protein]: step 2/2. Catalyzes the radical-mediated insertion of two sulfur atoms into the C-6 and C-8 positions of the octanoyl moiety bound to the lipoyl domains of lipoate-dependent enzymes, thereby converting the octanoylated domains into lipoylated derivatives. The protein is Lipoyl synthase of Chlorobium phaeobacteroides (strain DSM 266 / SMG 266 / 2430).